The sequence spans 158 residues: uncharacterized protein (158 aa).

The protein belongs to the SixA phosphatase family.

This is an uncharacterized protein from Mycobacterium tuberculosis (strain CDC 1551 / Oshkosh).